Reading from the N-terminus, the 45-residue chain is Large ribosomal subunit protein bL34 (45 aa).

Positions 1–45 (MTKRTFGGTSRKRKRVSGFRVRMRSHTGRRVIKSRRKRGRERIAV) are disordered. The span at 10–45 (SRKRKRVSGFRVRMRSHTGRRVIKSRRKRGRERIAV) shows a compositional bias: basic residues.

It belongs to the bacterial ribosomal protein bL34 family.

The sequence is that of Large ribosomal subunit protein bL34 from Prochlorococcus marinus subsp. pastoris (strain CCMP1986 / NIES-2087 / MED4).